Consider the following 439-residue polypeptide: MEQFSAFKLLLKKQYETTLGFYDKYIKNLKRFALKNNVLFVIVDNEFARETLNSNPDIVGLASKLYDDIRAVRFVNEQDFFINLAKLEEDNRETLYQSSGLSKNFTFKNFVVGDGNRRVYEAGVRISETQDADFSPLFIYGETGLGKTHLLQAIGNDKFFHFPNAKVKYVVSSDFAQEVVNAFYQKEKDQGIEKLKAAYESLDLLLIDDTQIFGKKEKTLEILFSIFNNLVSKGKQIVFVSDKTPDELANIDPRMVSRFKSGLLLKIEKHNLSSLCEILAVKLKEKDPNIQITNEAREKAAQISGNDVRSLNGIATKLLFYVKTTKQNLINNDNLKEILFEEFEKFHKKSFDPYLLIENVCRRFNVPVDSVLSENRKAELVRVRDVCNYILREKYKMQFQQIGKIFKRNHSTVVAAVKRVAKMIEKDDSLQDIITSLVI.

Positions 1 to 72 are domain I, interacts with DnaA modulators; that stretch reads MEQFSAFKLL…SKLYDDIRAV (72 aa). Residues 72-99 are domain II; that stretch reads VRFVNEQDFFINLAKLEEDNRETLYQSS. A domain III, AAA+ region region spans residues 100–322; the sequence is GLSKNFTFKN…GIATKLLFYV (223 aa). ATP contacts are provided by Gly144, Gly146, Lys147, and Thr148. The interval 323-439 is domain IV, binds dsDNA; the sequence is KTTKQNLINN…LQDIITSLVI (117 aa).

The protein belongs to the DnaA family. In terms of assembly, oligomerizes as a right-handed, spiral filament on DNA at oriC.

It localises to the cytoplasm. Its function is as follows. Plays an essential role in the initiation and regulation of chromosomal replication. ATP-DnaA binds to the origin of replication (oriC) to initiate formation of the DNA replication initiation complex once per cell cycle. Binds the DnaA box (a 9 base pair repeat at the origin) and separates the double-stranded (ds)DNA. Forms a right-handed helical filament on oriC DNA; dsDNA binds to the exterior of the filament while single-stranded (ss)DNA is stabiized in the filament's interior. The ATP-DnaA-oriC complex binds and stabilizes one strand of the AT-rich DNA unwinding element (DUE), permitting loading of DNA polymerase. After initiation quickly degrades to an ADP-DnaA complex that is not apt for DNA replication. Binds acidic phospholipids. In Mycoplasma pneumoniae (strain ATCC 29342 / M129 / Subtype 1) (Mycoplasmoides pneumoniae), this protein is Chromosomal replication initiator protein DnaA.